A 775-amino-acid polypeptide reads, in one-letter code: Protein STRUBBELIG-RECEPTOR FAMILY 1 (775 aa).

Positions 1 to 31 (MRSMRSGRDNNICFLGFLSFALISLPSLSLA) are cleaved as a signal peptide. Residues 32-314 (LTNPDDVAAI…GKEDSFTSKR (283 aa)) are Extracellular-facing. LRR repeat units lie at residues 101 to 122 (SLKAMDFSNNHIGGSIPSTLPV), 123 to 146 (SLQNLFLSGNNFTGTIPESLSSLK), 147 to 169 (SLSVMSLNNNLLSGKIPDVFQDL), 171 to 193 (LMINIDLSSNNLSGPLPPSMQNL), 195 to 217 (TLTSLLLQNNHLSGELDVLQDLP), and 218 to 238 (LKDLNVENNLFNGPIPEKLLS). Residue Asn133 is glycosylated (N-linked (GlcNAc...) asparagine). Residues Asn181 and Asn192 are each glycosylated (N-linked (GlcNAc...) asparagine). The N-linked (GlcNAc...) asparagine glycan is linked to Asn250. Positions 254-308 (APSPSPETPPSPTSPKRPFFGPPSPNASAGHGQAHVRSPPSDHHPSRPTPQGKED) are disordered. A compositionally biased stretch (pro residues) spans 256 to 278 (SPSPETPPSPTSPKRPFFGPPSP). The N-linked (GlcNAc...) asparagine glycan is linked to Asn279. Residues 315 to 335 (IIWISILGAFSFVVLALVCLL) form a helical membrane-spanning segment. The Cytoplasmic segment spans residues 336–775 (CGRKCLRKRE…NGDNQYTGRR (440 aa)). The interval 345-414 (EDSEQLSKPH…VGSESKQESH (70 aa)) is disordered. The span at 367 to 379 (RSNASMLPPSNTF) shows a compositional bias: polar residues. Positions 380–391 (NKDKEARPKERV) are enriched in basic and acidic residues. Residues 478 to 756 (FSHENLIGTG…EVVQDLSDMI (279 aa)) form the Protein kinase domain.

This sequence belongs to the protein kinase superfamily. Ser/Thr protein kinase family. In terms of tissue distribution, expressed in roots, stems, leaves and flowers. Low expression in seedlings and siliques.

Its subcellular location is the membrane. In terms of biological role, not essential for epidermal patterning and not redundant with STRUBBELIG. The polypeptide is Protein STRUBBELIG-RECEPTOR FAMILY 1 (SRF1) (Arabidopsis thaliana (Mouse-ear cress)).